Consider the following 214-residue polypeptide: MGLSHSHSVETRELVEKTGFSAEQIEHLHKRFKSLSGDEPTIRRGHLNDISDLVLNPIRSKIIDAFFDKRNLRKGPSGYVEEINFEEFLIIMSYFRPLSQHMDEENISVCRTDKLRFLFNMYDSDNDNKITLEEYRKVVEELLSGNPNIEKEMARSIADGAMLEAASICVGQMEPDQVYEGITFDDFLKIWEGIDIETKMHIRFLNMESIPSCR.

A lipid anchor (N-myristoyl glycine) is attached at Gly-2. In terms of domain architecture, EF-hand spans 110–145 (CRTDKLRFLFNMYDSDNDNKITLEEYRKVVEELLSG). Residues Asp-123, Asp-125, Asp-127, Lys-129, and Glu-134 each coordinate Ca(2+).

This sequence belongs to the calcineurin regulatory subunit family. CHP subfamily. As to quaternary structure, monomer. Homodimer.

The protein resides in the nucleus. It is found in the cytoplasm. It localises to the membrane. The protein localises to the cell membrane. Its subcellular location is the cell projection. The protein resides in the lamellipodium. It is found in the ruffle membrane. Functionally, functions as an integral cofactor in cell pH regulation by controlling plasma membrane-type Na(+)/H(+) exchange activity. Promotes the induction of hematopoietic stem cell differentiation toward megakaryocytic lineage. Essential for the coupling of ERK cascade activation with the expression of ETS family genes in megakaryocytic differentiation. Also involved in granulocytic differentiation in a ERK-dependent manner. Inhibits the phosphatase activity of calcineurin. The chain is Calcineurin B homologous protein 3 from Xenopus laevis (African clawed frog).